A 179-amino-acid polypeptide reads, in one-letter code: ATP-dependent protease subunit HslV (179 aa).

T7 is a catalytic residue. Positions 162, 165, and 168 each coordinate Na(+).

The protein belongs to the peptidase T1B family. HslV subfamily. As to quaternary structure, a double ring-shaped homohexamer of HslV is capped on each side by a ring-shaped HslU homohexamer. The assembly of the HslU/HslV complex is dependent on binding of ATP.

The protein localises to the cytoplasm. It catalyses the reaction ATP-dependent cleavage of peptide bonds with broad specificity.. With respect to regulation, allosterically activated by HslU binding. Its function is as follows. Protease subunit of a proteasome-like degradation complex believed to be a general protein degrading machinery. In Bordetella pertussis (strain Tohama I / ATCC BAA-589 / NCTC 13251), this protein is ATP-dependent protease subunit HslV.